A 1414-amino-acid chain; its full sequence is DNA-directed RNA polymerase subunit beta' (1414 aa).

Zn(2+) is bound by residues cysteine 70, cysteine 72, cysteine 85, and cysteine 88. 3 residues coordinate Mg(2+): aspartate 460, aspartate 462, and aspartate 464. Zn(2+) is bound by residues cysteine 814, cysteine 888, cysteine 895, and cysteine 898. Residues glutamate 1392–alanine 1403 are compositionally biased toward low complexity. A disordered region spans residues glutamate 1392–glutamate 1414.

This sequence belongs to the RNA polymerase beta' chain family. In terms of assembly, the RNAP catalytic core consists of 2 alpha, 1 beta, 1 beta' and 1 omega subunit. When a sigma factor is associated with the core the holoenzyme is formed, which can initiate transcription. Requires Mg(2+) as cofactor. It depends on Zn(2+) as a cofactor.

The catalysed reaction is RNA(n) + a ribonucleoside 5'-triphosphate = RNA(n+1) + diphosphate. Its function is as follows. DNA-dependent RNA polymerase catalyzes the transcription of DNA into RNA using the four ribonucleoside triphosphates as substrates. This chain is DNA-directed RNA polymerase subunit beta', found in Coxiella burnetii (strain RSA 331 / Henzerling II).